The primary structure comprises 220 residues: Probable transaldolase (220 aa).

Catalysis depends on K87, which acts as the Schiff-base intermediate with substrate.

Belongs to the transaldolase family. Type 3B subfamily.

It is found in the cytoplasm. The enzyme catalyses D-sedoheptulose 7-phosphate + D-glyceraldehyde 3-phosphate = D-erythrose 4-phosphate + beta-D-fructose 6-phosphate. It participates in carbohydrate degradation; pentose phosphate pathway; D-glyceraldehyde 3-phosphate and beta-D-fructose 6-phosphate from D-ribose 5-phosphate and D-xylulose 5-phosphate (non-oxidative stage): step 2/3. Functionally, transaldolase is important for the balance of metabolites in the pentose-phosphate pathway. In Porphyromonas gingivalis (strain ATCC 33277 / DSM 20709 / CIP 103683 / JCM 12257 / NCTC 11834 / 2561), this protein is Probable transaldolase.